The primary structure comprises 70 residues: Small ribosomal subunit protein bS21 (70 aa).

It belongs to the bacterial ribosomal protein bS21 family.

This Laribacter hongkongensis (strain HLHK9) protein is Small ribosomal subunit protein bS21.